The following is a 305-amino-acid chain: Putative F-box protein PP2-B8 (305 aa).

One can recognise an F-box domain in the interval 33 to 79 (VAELDDLPEECVSIIVSFTSPQDACVLASVSKTFASAVKSDIVWEKF).

The protein is Putative F-box protein PP2-B8 (PP2B8) of Arabidopsis thaliana (Mouse-ear cress).